The following is a 293-amino-acid chain: Undecaprenyl-diphosphatase (293 aa).

The next 7 helical transmembrane spans lie at 57–77 (PGVSATAVIQLGSILAVIVYF), 106–126 (LAIAIGTMPILLAGMAIKLFW), 134–154 (IRSLPSIAVVSIVMALLLALA), 172–192 (GFVVGLAQALALIPGVSRSGS), 212–232 (FLLGIPAITLAGLVELKDAFA), 239–259 (VLPLLVGIVSAAFVSWLAIDW), and 268–288 (STWIFVAYRLLFGVLVLAWWL).

The protein belongs to the UppP family.

Its subcellular location is the cell inner membrane. It catalyses the reaction di-trans,octa-cis-undecaprenyl diphosphate + H2O = di-trans,octa-cis-undecaprenyl phosphate + phosphate + H(+). Catalyzes the dephosphorylation of undecaprenyl diphosphate (UPP). Confers resistance to bacitracin. In Prochlorococcus marinus (strain MIT 9303), this protein is Undecaprenyl-diphosphatase.